A 427-amino-acid polypeptide reads, in one-letter code: Gamma-glutamyl phosphate reductase (427 aa).

It belongs to the gamma-glutamyl phosphate reductase family.

It localises to the cytoplasm. The catalysed reaction is L-glutamate 5-semialdehyde + phosphate + NADP(+) = L-glutamyl 5-phosphate + NADPH + H(+). The protein operates within amino-acid biosynthesis; L-proline biosynthesis; L-glutamate 5-semialdehyde from L-glutamate: step 2/2. Catalyzes the NADPH-dependent reduction of L-glutamate 5-phosphate into L-glutamate 5-semialdehyde and phosphate. The product spontaneously undergoes cyclization to form 1-pyrroline-5-carboxylate. The protein is Gamma-glutamyl phosphate reductase of Rhizobium johnstonii (strain DSM 114642 / LMG 32736 / 3841) (Rhizobium leguminosarum bv. viciae).